The chain runs to 194 residues: Holliday junction branch migration complex subunit RuvA (194 aa).

The segment at 1-63 is domain I; that stretch reads MFEYLKGTVA…EDELSLYGFM (63 aa). The interval 64–142 is domain II; that stretch reads SIEELDMFQK…KTNVVYDYTL (79 aa). The interval 143–151 is flexible linker; sequence FNDDHKDDD. Positions 151–194 are domain III; sequence DEAVQALMALGYSKLESEKAVEAVRDMSLGTEDVIKRALKWLMK.

The protein belongs to the RuvA family. As to quaternary structure, homotetramer. Forms an RuvA(8)-RuvB(12)-Holliday junction (HJ) complex. HJ DNA is sandwiched between 2 RuvA tetramers; dsDNA enters through RuvA and exits via RuvB. An RuvB hexamer assembles on each DNA strand where it exits the tetramer. Each RuvB hexamer is contacted by two RuvA subunits (via domain III) on 2 adjacent RuvB subunits; this complex drives branch migration. In the full resolvosome a probable DNA-RuvA(4)-RuvB(12)-RuvC(2) complex forms which resolves the HJ.

The protein localises to the cytoplasm. Functionally, the RuvA-RuvB-RuvC complex processes Holliday junction (HJ) DNA during genetic recombination and DNA repair, while the RuvA-RuvB complex plays an important role in the rescue of blocked DNA replication forks via replication fork reversal (RFR). RuvA specifically binds to HJ cruciform DNA, conferring on it an open structure. The RuvB hexamer acts as an ATP-dependent pump, pulling dsDNA into and through the RuvAB complex. HJ branch migration allows RuvC to scan DNA until it finds its consensus sequence, where it cleaves and resolves the cruciform DNA. The protein is Holliday junction branch migration complex subunit RuvA of Alkaliphilus oremlandii (strain OhILAs) (Clostridium oremlandii (strain OhILAs)).